We begin with the raw amino-acid sequence, 122 residues long: NADH-ubiquinone oxidoreductase chain 3 (122 aa).

3 helical membrane-spanning segments follow: residues 12-32 (VLIF…LSYV), 66-86 (LVAI…PWAV), and 91-111 (VTIF…VGFI).

Belongs to the complex I subunit 3 family.

It is found in the mitochondrion membrane. It catalyses the reaction a ubiquinone + NADH + 5 H(+)(in) = a ubiquinol + NAD(+) + 4 H(+)(out). Functionally, core subunit of the mitochondrial membrane respiratory chain NADH dehydrogenase (Complex I) that is believed to belong to the minimal assembly required for catalysis. Complex I functions in the transfer of electrons from NADH to the respiratory chain. The immediate electron acceptor for the enzyme is believed to be ubiquinone. This Reclinomonas americana protein is NADH-ubiquinone oxidoreductase chain 3 (NAD3).